Reading from the N-terminus, the 411-residue chain is S-adenosylmethionine synthase (411 aa).

Residue His15 participates in ATP binding. Asp17 provides a ligand contact to Mg(2+). Residue Glu43 coordinates K(+). L-methionine is bound by residues Glu56 and Gln99. The interval 99–109 (QSQEIAQGVDT) is flexible loop. ATP is bound by residues 179–181 (DGK), Asp260, 266–267 (RK), Ala283, and Lys287. An L-methionine-binding site is contributed by Asp260. Lys291 serves as a coordination point for L-methionine.

The protein belongs to the AdoMet synthase family. As to quaternary structure, homotetramer; dimer of dimers. Mg(2+) serves as cofactor. The cofactor is K(+).

It localises to the cytoplasm. The enzyme catalyses L-methionine + ATP + H2O = S-adenosyl-L-methionine + phosphate + diphosphate. It functions in the pathway amino-acid biosynthesis; S-adenosyl-L-methionine biosynthesis; S-adenosyl-L-methionine from L-methionine: step 1/1. Its function is as follows. Catalyzes the formation of S-adenosylmethionine (AdoMet) from methionine and ATP. The overall synthetic reaction is composed of two sequential steps, AdoMet formation and the subsequent tripolyphosphate hydrolysis which occurs prior to release of AdoMet from the enzyme. The chain is S-adenosylmethionine synthase from Corynebacterium jeikeium (strain K411).